A 276-amino-acid chain; its full sequence is Outer membrane lipoprotein 2 (276 aa).

An N-terminal signal peptide occupies residues 1-19 (MNFKKLLGVALVSALALTA). Residue C20 is the site of N-palmitoyl cysteine attachment. C20 carries S-diacylglycerol cysteine lipidation.

Belongs to the NlpA lipoprotein family.

It localises to the cell outer membrane. This Mannheimia haemolytica (Pasteurella haemolytica) protein is Outer membrane lipoprotein 2 (plpB).